The following is a 379-amino-acid chain: Queuine tRNA-ribosyltransferase (379 aa).

Catalysis depends on D94, which acts as the Proton acceptor. Substrate contacts are provided by residues 94 to 98, D148, Q191, and G218; that span reads DSGGF. Residues 249–255 are RNA binding; the sequence is GVGSPDS. Residue D268 is the Nucleophile of the active site. Positions 273-277 are RNA binding; important for wobble base 34 recognition; it reads TRIAR. Positions 306, 308, 311, and 337 each coordinate Zn(2+).

The protein belongs to the queuine tRNA-ribosyltransferase family. As to quaternary structure, homodimer. Within each dimer, one monomer is responsible for RNA recognition and catalysis, while the other monomer binds to the replacement base PreQ1. Requires Zn(2+) as cofactor.

The enzyme catalyses 7-aminomethyl-7-carbaguanine + guanosine(34) in tRNA = 7-aminomethyl-7-carbaguanosine(34) in tRNA + guanine. Its pathway is tRNA modification; tRNA-queuosine biosynthesis. Its function is as follows. Catalyzes the base-exchange of a guanine (G) residue with the queuine precursor 7-aminomethyl-7-deazaguanine (PreQ1) at position 34 (anticodon wobble position) in tRNAs with GU(N) anticodons (tRNA-Asp, -Asn, -His and -Tyr). Catalysis occurs through a double-displacement mechanism. The nucleophile active site attacks the C1' of nucleotide 34 to detach the guanine base from the RNA, forming a covalent enzyme-RNA intermediate. The proton acceptor active site deprotonates the incoming PreQ1, allowing a nucleophilic attack on the C1' of the ribose to form the product. After dissociation, two additional enzymatic reactions on the tRNA convert PreQ1 to queuine (Q), resulting in the hypermodified nucleoside queuosine (7-(((4,5-cis-dihydroxy-2-cyclopenten-1-yl)amino)methyl)-7-deazaguanosine). In Bacillus cereus (strain G9842), this protein is Queuine tRNA-ribosyltransferase.